A 378-amino-acid chain; its full sequence is Aminotransferase apf4 (378 aa).

Arg88 contributes to the pyridoxal 5'-phosphate binding site. Lys189 carries the post-translational modification N6-(pyridoxal phosphate)lysine. Pyridoxal 5'-phosphate is bound at residue Glu228. The tract at residues 359 to 378 is disordered; the sequence is ERGHNGQPTADPTRVIEMPE.

Belongs to the class-IV pyridoxal-phosphate-dependent aminotransferase family. Pyridoxal 5'-phosphate is required as a cofactor.

It functions in the pathway secondary metabolite biosynthesis. Its function is as follows. Aminotransferase; part of the gene cluster that mediates the biosynthesis of the cyclic tetrapeptide apicidin F (APF). The non-ribosomal peptide synthetase apf1 incorporates four different amino acids to produce apicidin F: L-phenylalanine, D-pipecolic acid (D-pip), N-methoxy-L-tryptophan and L-2-aminooctanedioic acid. L-Phenylalanine is the only proteinogenic amino acid directly used by apf1. The 3 other apf1 substrates are non-proteinogenic and have to be modified by other enzymes of the cluster. Lysine is converted to delta-1-pyrroline-5-carboxylate (P5C) which is reduced to L-pipecolic acid (L-pip) by apf3. L-pip is epimerized to D-pip, probably by apf1 activity, prior to incorporation. L-Tryptophan is N-oxidyzed by one of the cytochrome P450 monooxygenases (apf7 or apf8), and further methylated at the hydroxy group by the O-methyltransferase apf6 to yield N-methoxy-L-tryptophan. The synthesis of the fourth apf1 substrate is more complex. The fatty acid synthase apf5 is involved in the synthesis of the octanoic acid backbone of L-2-aminooctanedioic acid by fixing one acetyl-CoA unit and three malonyl-CoA units. Then one of the cytochrome P450 monooxygenases (apf7 or apf8) may oxidize this backbone to 2-oxooctanoic acid. The aminotransferase apf4 is predicted to catalyze the exchange of the keto group with an amino group. The next step would be the oxidation of 2-aminooctanoic acid by one of the cytochrome P450 monooxygenases (apf7 or apf8). The last step is the oxidation of 2-amino-8-hydroxyoctanoic acid to 2-aminooctanedioic acid is catalyzed by the FAD-dependent monooxygenase apf9. The polypeptide is Aminotransferase apf4 (Gibberella fujikuroi (strain CBS 195.34 / IMI 58289 / NRRL A-6831) (Bakanae and foot rot disease fungus)).